The chain runs to 556 residues: Interleukin-1 receptor-like 1 (556 aa).

The first 18 residues, 1–18, serve as a signal peptide directing secretion; that stretch reads MGFWILAILTILMYSTAA. Ig-like C2-type domains follow at residues 19 to 103 and 114 to 197; these read KFSK…ANVT and PDYL…VTAT. Over 19–328 the chain is Extracellular; it reads KFSKQSWGLE…SRKNPIDHHS (310 aa). Cysteines 36 and 87 form a disulfide. N-linked (GlcNAc...) asparagine glycosylation is found at Asn-54, Asn-95, Asn-101, Asn-140, and Asn-191. 2 disulfides stabilise this stretch: Cys-111–Cys-151 and Cys-133–Cys-181. The flexible linker stretch occupies residues 198-211; the sequence is RSFTVKDEQGFSLF. The region spanning 212–319 is the Ig-like C2-type 3 domain; sequence PVIGAPAQNE…GLRRHTVRLS (108 aa). Residues Asn-232, Asn-254, and Asn-273 are each glycosylated (N-linked (GlcNAc...) asparagine). Cystine bridges form between Cys-235-Cys-303 and Cys-238-Cys-282. Lys-321 participates in a covalent cross-link: Glycyl lysine isopeptide (Lys-Gly) (interchain with G-Cter in ubiquitin). Residues 329–349 traverse the membrane as a helical segment; the sequence is IYCIIAVCSVFLMLINVLVII. Residues 350–556 are Cytoplasmic-facing; it reads LKMFWIEATL…SLTPLAAQKQ (207 aa). A TIR domain is found at 375-535; the sequence is KLYDAYVVYP…KFWKHVRYQM (161 aa). Residue Glu-461 is part of the active site.

It belongs to the interleukin-1 receptor family. Interacts with MYD88, IRAK1, IRAK4, and TRAF6. Bound to its ligand IL-33, interacts with IL1RAP to form the minimal interleukin-33 signaling complex with a 1:1:1 stoichiometry. Interacts with KIT (bound to KITLG/SCF). A mast cell-specific KITLG/SCF-induced interleukin-33 signaling complex contains IL1RL1, IL1RAP, KIT and MYD88. Interacts with TMED1. Ubiquitinated at Lys-321 in a FBXL19-mediated manner; leading to proteasomal degradation. Ubiquitination by TRAF6 via 'Lys-27'-linked polyubiquitination and deubiquitination by USP38 serves as a critical regulatory mechanism for fine-tuning IL1RL1-mediated inflammatory response. Highly expressed in kidney, lung, placenta, stomach, skeletal muscle, colon and small intestine. Isoform A is prevalently expressed in the lung, testis, placenta, stomach and colon. Isoform B is more abundant in the brain, kidney and the liver. Isoform C is not detected in brain, heart, liver, kidney and skeletal muscle. Expressed on T-cells in fibrotic liver; at protein level. Overexpressed in fibrotic and cirrhotic liver.

The protein resides in the cell membrane. It is found in the secreted. The enzyme catalyses NAD(+) + H2O = ADP-D-ribose + nicotinamide + H(+). Functionally, receptor for interleukin-33 (IL-33) which plays crucial roles in innate and adaptive immunity, contributing to tissue homeostasis and responses to environmental stresses together with coreceptor IL1RAP. Its stimulation recruits MYD88, IRAK1, IRAK4, and TRAF6, followed by phosphorylation of MAPK3/ERK1 and/or MAPK1/ERK2, MAPK14, and MAPK8. Possibly involved in helper T-cell function. Upon tissue injury, induces UCP2-dependent mitochondrial rewiring that attenuates the generation of reactive oxygen species and preserves the integrity of Krebs cycle required for persistent production of itaconate and subsequent GATA3-dependent differentiation of inflammation-resolving alternatively activated macrophages. In terms of biological role, inhibits IL-33 signaling. The protein is Interleukin-1 receptor-like 1 (IL1RL1) of Homo sapiens (Human).